Here is a 231-residue protein sequence, read N- to C-terminus: Ribosomal RNA small subunit methyltransferase G (231 aa).

Residues G75, F80, A126–E127, and R142 each bind S-adenosyl-L-methionine.

Belongs to the methyltransferase superfamily. RNA methyltransferase RsmG family.

It localises to the cytoplasm. Its function is as follows. Specifically methylates the N7 position of a guanine in 16S rRNA. This Mycoplasma capricolum subsp. capricolum (strain California kid / ATCC 27343 / NCTC 10154) protein is Ribosomal RNA small subunit methyltransferase G.